A 313-amino-acid chain; its full sequence is Epoxide hydrolase 1 (313 aa).

The 275-residue stretch at 25-299 (PAVLFLHGFP…AAHFINQEKA (275 aa)) folds into the AB hydrolase-1 domain. Catalysis depends on D100, which acts as the Nucleophile. Y149 is an an epoxide binding site. Catalysis depends on Y227, which acts as the Proton donor. The active-site Proton acceptor is H292.

Belongs to the AB hydrolase superfamily. Epoxide hydrolase family. Homodimer. In terms of tissue distribution, highly expressed in fruits 15 days after anthesis (15-DAA).

It catalyses the reaction an epoxide + H2O = an ethanediol. The enzyme catalyses (24S)-24,25-epoxycucurbitadienol + H2O = (24R)-24,25-dihydroxycucurbitadienol. Its pathway is secondary metabolite biosynthesis; terpenoid biosynthesis. Functionally, epoxide hydrolase involved in the biosynthesis of cucurbitacin and mogroside tetracyclic triterpene natural products (e.g. siamenoside I and mogrosides IV, V and VI). Cucurbitacins have cytotoxic properties and exhibit deterrent taste as a defense barrier against herbivores. Mogrosides are nonsugar highly oxygenated compounds used as high-intensity zero-calorie sweeteners; they also possess pharmacological properties such as regulating immunity, lowering blood sugar and lipid levels, protecting the liver, and acting as antioxidants and antitumor agents. Catalyzes the hydrolysis of aromatic epoxide-containing substrates, such as the conversion of 24,25-epoxycucurbitadienol to 24,25-dihydroxycucurbitadienol. The sequence is that of Epoxide hydrolase 1 from Siraitia grosvenorii (Monk's fruit).